The primary structure comprises 523 residues: L-tyrosine:2-oxoglutarate aminotransferase ucdG (523 aa).

Belongs to the class-I pyridoxal-phosphate-dependent aminotransferase family. As to quaternary structure, homodimer. Requires pyridoxal 5'-phosphate as cofactor.

It is found in the cytoplasm. It carries out the reaction L-tyrosine + 2-oxoglutarate = 3-(4-hydroxyphenyl)pyruvate + L-glutamate. Its pathway is secondary metabolite biosynthesis. In terms of biological role, nonribosomal peptide synthetase that mediates the biosynthesis of usterphenyllins and uscandidusins, p-terphenyl derivatives. Within the pathway, ucdG is probably involved in the conversion of L-tyrosine into 4-hydroxyphenylpyruvate (HPPA) as a precursor for the usterphenyllin and uscandidusin biosynthesis. UcdE further prenylates position C-14 of ring C of usterphenyllin B to form usterphenyllin A. The pathway begin with the biosynthesis of 4-hydroxyphenylpyruvate (HPPA) from L-tyrosine, possibly by the aminotransferase ucdG. The nonribosomal peptide synthetase ucdA then condenses two HPPA units to produce atromentin. The key step in this pathway is the reduction and dehydration of atromentin to form a terphenyl triol intermediate, performed by the NAD-dependent dehydrogenase ucdB. Further O-methylation by the methyltransferase ucdC forms terphenyllin carrying two methoxy moieties at C-9 and C-12, and subsequent dihydroxylation at C-3 of ring A and C-15 of ring C by the flavin-dependent oxygenase ucdD leads to 3,15-dihydroxyterphenyllin. Prenylation by ucdE at position C-5 of ring A forms usterphenyllin B, and is followed by a second prenylation at position C-14 of ring C to form usterphenyllin A. The following furan ring formation that leads to uscandidusins A and B was proven to be an unexpected spontaneous non-enzymatic reaction. This Aspergillus ustus protein is L-tyrosine:2-oxoglutarate aminotransferase ucdG.